The primary structure comprises 1098 residues: Bifunctional helicase and thymine dioxygenase JBP2 (1098 aa).

A thymine dioxygenase region spans residues 1–540 (MLNGLTRVST…PPLFVPTRLA (540 aa)). Residues H415, D417, and H465 each coordinate Fe cation. Residue R479 participates in 2-oxoglutarate binding. A DNA Helicase region spans residues 541 to 1098 (SHLAPVQLAA…RYQESVRESE (558 aa)). The region spanning 555–730 (VERTEKQSGC…YRLVGWVNKG (176 aa)) is the Helicase ATP-binding domain. Position 568 to 575 (568 to 575 (MTMGLGKT)) interacts with ATP. The DEAH box motif lies at 681 to 684 (DEGH). The Helicase C-terminal domain occupies 897–1057 (VLVDIVLRVQ…ALPDELEDCA (161 aa)).

It in the C-terminal section; belongs to the SNF2/RAD54 helicase family. In the N-terminal section; belongs to the TET family. JBP2 subfamily. The cofactor is Fe(2+).

It is found in the nucleus. The enzyme catalyses ATP + H2O = ADP + phosphate + H(+). The catalysed reaction is thymine + 2-oxoglutarate + O2 = 5-hydroxymethyluracil + succinate + CO2. Its function is as follows. Dioxygenase that catalyzes the first step of DNA base J (beta-d-glucosyl-HOMedU) biosynthesis by converting thymine to 5-hydroxymethyluracil (HOMedU). DNA base J is a hypermodified thymidine residue found in the genome of kinetoplastid parasites, which is localized primarily to repetitive DNA, namely the telomeres, and is implicated in the regulation of antigenic variation. Probably also acts as a DNA helicase. Recognizes and binds specific regions of the genome, hydrolyzes ATP and allows the DNA base J de novo synthesis. Involved in initial synthesis of DNA base J, JBP1 being able to act via the basal level of DNA base J and propagate further synthesis. In contrast to JBP1, it does not specifically bind DNA base J, however it binds chromatin. In Leishmania major, this protein is Bifunctional helicase and thymine dioxygenase JBP2 (JBP2).